Consider the following 199-residue polypeptide: Small ribosomal subunit protein uS4 (199 aa).

Residues Ser94–Ile157 enclose the S4 RNA-binding domain.

The protein belongs to the universal ribosomal protein uS4 family. As to quaternary structure, part of the 30S ribosomal subunit. Contacts protein S5. The interaction surface between S4 and S5 is involved in control of translational fidelity.

In terms of biological role, one of the primary rRNA binding proteins, it binds directly to 16S rRNA where it nucleates assembly of the body of the 30S subunit. Its function is as follows. With S5 and S12 plays an important role in translational accuracy. In Mycoplasma mobile (strain ATCC 43663 / 163K / NCTC 11711) (Mesomycoplasma mobile), this protein is Small ribosomal subunit protein uS4.